The sequence spans 569 residues: Glutamate--tRNA ligase (569 aa).

Positions 110 to 120 match the 'HIGH' region motif; sequence PNPNGPPTLGS.

It belongs to the class-I aminoacyl-tRNA synthetase family. Glutamate--tRNA ligase type 2 subfamily.

The protein resides in the cytoplasm. It catalyses the reaction tRNA(Glu) + L-glutamate + ATP = L-glutamyl-tRNA(Glu) + AMP + diphosphate. Catalyzes the attachment of glutamate to tRNA(Glu) in a two-step reaction: glutamate is first activated by ATP to form Glu-AMP and then transferred to the acceptor end of tRNA(Glu). This chain is Glutamate--tRNA ligase, found in Methanococcoides burtonii (strain DSM 6242 / NBRC 107633 / OCM 468 / ACE-M).